The chain runs to 147 residues: E3 ubiquitin-protein ligase RHA2B (147 aa).

The segment at 74-116 (CIVCLSKLKTGEEVRKLDCRHVFHKQCLEGWLQHLNFNCPLCR) adopts an RING-type; atypical zinc-finger fold.

In terms of assembly, interacts with NAC19. As to expression, expressed in vascular tissue, root tips, embryos and pistils.

The protein localises to the cytoplasm. Its subcellular location is the nucleus. The enzyme catalyses S-ubiquitinyl-[E2 ubiquitin-conjugating enzyme]-L-cysteine + [acceptor protein]-L-lysine = [E2 ubiquitin-conjugating enzyme]-L-cysteine + N(6)-ubiquitinyl-[acceptor protein]-L-lysine.. It functions in the pathway protein modification; protein ubiquitination. Its function is as follows. E3 ubiquitin-protein ligase involved in the positive regulation of abscisic acid (ABA) signaling and responses to salt and osmotic stresses during seed germination and early seedling development. Acts additively with RHA2A in regulating ABA signaling and drought response. Possesses E3 ubiquitin ligase activity in vitro. This Arabidopsis thaliana (Mouse-ear cress) protein is E3 ubiquitin-protein ligase RHA2B.